Consider the following 281-residue polypeptide: Large ribosomal subunit protein mL46 (281 aa).

The transit peptide at 1 to 19 (MKVNLMLKRGLATATATAS) directs the protein to the mitochondrion. Positions 106–118 (RERSTKQEVKLSD) are enriched in basic and acidic residues. Residues 106–141 (RERSTKQEVKLSDDSTVAFSNNQKEQSKDDVNRPVI) are disordered. A compositionally biased stretch (polar residues) spans 119-129 (DSTVAFSNNQK).

Belongs to the mitochondrion-specific ribosomal protein mL46 family. Component of the mitochondrial large ribosomal subunit (mt-LSU). Mature yeast 74S mitochondrial ribosomes consist of a small (37S) and a large (54S) subunit. The 37S small subunit contains a 15S ribosomal RNA (15S mt-rRNA) and 34 different proteins. The 54S large subunit contains a 21S rRNA (21S mt-rRNA) and 46 different proteins.

Its subcellular location is the mitochondrion. In terms of biological role, component of the mitochondrial ribosome (mitoribosome), a dedicated translation machinery responsible for the synthesis of mitochondrial genome-encoded proteins, including at least some of the essential transmembrane subunits of the mitochondrial respiratory chain. The mitoribosomes are attached to the mitochondrial inner membrane and translation products are cotranslationally integrated into the membrane. In Saccharomyces cerevisiae (strain ATCC 204508 / S288c) (Baker's yeast), this protein is Large ribosomal subunit protein mL46 (MRPL17).